We begin with the raw amino-acid sequence, 57 residues long: Orphan toxin OrtT (57 aa).

Transmembrane regions (helical) follow at residues His-6–Ser-26 and Phe-34–Phe-54.

It belongs to the GhoT/OrtT toxin family.

Its subcellular location is the cell inner membrane. In terms of biological role, acts as an orphan toxin which is important for maintaining cell fitness during stress related to the stringent response. Increases the formation of persister cells. Has no known antitoxin. This chain is Orphan toxin OrtT, found in Escherichia coli O6:H1 (strain CFT073 / ATCC 700928 / UPEC).